Here is a 382-residue protein sequence, read N- to C-terminus: MFTYTRPVMLLLCGLLLLTLAIAVLNTLVLLWLAQANLPTWQVGMVSSSYFTGNLVGTLFTGYLIKRIGFNRSYYLASLIFAAGCVGLGVMVGFWSWMSWRFIAGIGCAMIWVVVESALMCSGTSHNRGRLLAAYMMVYYMGTFLGQLLVSKVSGELLHVLPWVTGMILAGILPLLFTRIVNQQTQTRHSSSISAMLKLRQARLGVNGCIISGIVLGSLYGLMPLYLKHQGMANASIGFWMAVLVSAGILGQWPMGRLADKFGRLLVLRVQVFVVILGSIAMLTQAAMAPALFILGAAGFTLYPVAMAWACEKVEHHQLVAMNQALLLSYTVGSLLGPSFAAMLMQNYSDNLLFIMIASVSFIYLLMLLRNAGQTPNPVAHI.

The next 12 helical transmembrane spans lie at 14 to 34, 45 to 65, 75 to 95, 102 to 122, 131 to 151, 157 to 177, 204 to 224, 231 to 251, 270 to 290, 291 to 311, 325 to 345, and 349 to 369; these read GLLLLTLAIAVLNTLVLLWLA, MVSSSYFTGNLVGTLFTGYLI, YLASLIFAAGCVGLGVMVGFW, FIAGIGCAMIWVVVESALMCS, LLAAYMMVYYMGTFLGQLLVS, LLHVLPWVTGMILAGILPLLF, LGVNGCIISGIVLGSLYGLMP, GMANASIGFWMAVLVSAGILG, VQVFVVILGSIAMLTQAAMAP, ALFILGAAGFTLYPVAMAWAC, ALLLSYTVGSLLGPSFAAMLM, and SDNLLFIMIASVSFIYLLMLL.

This sequence belongs to the major facilitator superfamily. YcaD (TC 2.A.1.26) family.

The protein localises to the cell inner membrane. This is an uncharacterized protein from Salmonella paratyphi A (strain ATCC 9150 / SARB42).